The primary structure comprises 115 residues: Transcription and mRNA export factor ENY2 (115 aa).

The protein belongs to the ENY2 family. Component of a deubiquitination module (DUB module) formed by ENY2, SGF11, and UBP22 in Arabidopsis. Interacts directly with SGF11, but not with UBP22. Interacts with MOS4. Expressed in roots, cotyledons, leaves and upper part of sepals.

Its subcellular location is the nucleus. It is found in the nucleoplasm. Functionally, component of a deubiquitination module (DUB module) that specifically deubiquinates monoubiquinated histone H2B (H2Bub). Does not seem to be a component of the TREX-2 complex. Seems to act independently of the SAGA multiprotein complex. The DUB module is responsible for the major H2Bub deubiquitinase activity in Arabidopsis. The chain is Transcription and mRNA export factor ENY2 from Arabidopsis thaliana (Mouse-ear cress).